The primary structure comprises 487 residues: Protein nucleotidyltransferase YdiU (487 aa).

ATP-binding residues include Gly-90, Gly-92, Arg-93, Lys-113, Asp-125, Gly-126, Arg-176, and Arg-183. The active-site Proton acceptor is the Asp-252. Residues Asn-253 and Asp-262 each coordinate Mg(2+). Asp-262 provides a ligand contact to ATP.

Belongs to the SELO family. Mg(2+) is required as a cofactor. The cofactor is Mn(2+).

It carries out the reaction L-seryl-[protein] + ATP = 3-O-(5'-adenylyl)-L-seryl-[protein] + diphosphate. The catalysed reaction is L-threonyl-[protein] + ATP = 3-O-(5'-adenylyl)-L-threonyl-[protein] + diphosphate. The enzyme catalyses L-tyrosyl-[protein] + ATP = O-(5'-adenylyl)-L-tyrosyl-[protein] + diphosphate. It catalyses the reaction L-histidyl-[protein] + UTP = N(tele)-(5'-uridylyl)-L-histidyl-[protein] + diphosphate. It carries out the reaction L-seryl-[protein] + UTP = O-(5'-uridylyl)-L-seryl-[protein] + diphosphate. The catalysed reaction is L-tyrosyl-[protein] + UTP = O-(5'-uridylyl)-L-tyrosyl-[protein] + diphosphate. Its function is as follows. Nucleotidyltransferase involved in the post-translational modification of proteins. It can catalyze the addition of adenosine monophosphate (AMP) or uridine monophosphate (UMP) to a protein, resulting in modifications known as AMPylation and UMPylation. This chain is Protein nucleotidyltransferase YdiU, found in Pseudomonas savastanoi pv. phaseolicola (strain 1448A / Race 6) (Pseudomonas syringae pv. phaseolicola (strain 1448A / Race 6)).